The sequence spans 207 residues: MGNTVQTDNDFMQMQKPFALFAKWLEEATVSEINDPNAMALATVDKTGFPNVRMVLLKDFSPQGFVFYTNYESPKGQEILKSMKASLVFHWKSLRRQVRIRGIVEKVTPQEADAYFQSRPRDSRIGAWASKQSQPLESRFVLEKAIARYTTRYAVGNIPRPPYWSGFRVKPLSIEFWCDRPFRLHDRLLFTRDSVEHVDWKRQKLYP.

FMN-binding positions include 53 to 58 (RMVLLK), 68 to 69 (YT), K75, and Q97. Position 58 (K58) interacts with substrate. Substrate is bound by residues Y115, R119, and S123. FMN-binding positions include 132 to 133 (QS) and W177. 183–185 (RLH) lines the substrate pocket. FMN is bound at residue R187.

This sequence belongs to the pyridoxamine 5'-phosphate oxidase family. As to quaternary structure, homodimer. The cofactor is FMN.

It carries out the reaction pyridoxamine 5'-phosphate + O2 + H2O = pyridoxal 5'-phosphate + H2O2 + NH4(+). The enzyme catalyses pyridoxine 5'-phosphate + O2 = pyridoxal 5'-phosphate + H2O2. It participates in cofactor metabolism; pyridoxal 5'-phosphate salvage; pyridoxal 5'-phosphate from pyridoxamine 5'-phosphate: step 1/1. The protein operates within cofactor metabolism; pyridoxal 5'-phosphate salvage; pyridoxal 5'-phosphate from pyridoxine 5'-phosphate: step 1/1. Functionally, catalyzes the oxidation of either pyridoxine 5'-phosphate (PNP) or pyridoxamine 5'-phosphate (PMP) into pyridoxal 5'-phosphate (PLP). The protein is Pyridoxine/pyridoxamine 5'-phosphate oxidase of Bartonella henselae (strain ATCC 49882 / DSM 28221 / CCUG 30454 / Houston 1) (Rochalimaea henselae).